Reading from the N-terminus, the 557-residue chain is Tripeptidyl-peptidase 1 (557 aa).

Positions 1-16 are cleaved as a signal peptide; sequence MRVAVFVLSFIWLVNG. A propeptide spans 17–190 (removed in mature form); the sequence is ELLEADQDAV…WEGARQAILG (174 aa). A glycan (N-linked (GlcNAc...) asparagine) is linked at N53. A disulfide bond links C107 and C118. In terms of domain architecture, Peptidase S53 spans 194–557; it reads GVTPAVIRNR…YPVFLASLMD (364 aa). Residues N205 and N216 are each glycosylated (N-linked (GlcNAc...) asparagine). Residues E266 and D270 each act as charge relay system in the active site. N-linked (GlcNAc...) asparagine glycosylation is found at N280, N307, and N438. Cystine bridges form between C359–C521 and C517–C532. The Charge relay system role is filled by S470. D512 and V513 together coordinate Ca(2+). D538 is a Ca(2+) binding site.

The cofactor is Ca(2+). Activated by autocatalytic proteolytical processing.

It is found in the lysosome. The enzyme catalyses Release of an N-terminal tripeptide from a polypeptide, but also has endopeptidase activity.. Lysosomal serine protease with tripeptidyl-peptidase I activity. May act as a non-specific lysosomal peptidase which generates tripeptides from the breakdown products produced by lysosomal proteinases. Requires substrates with an unsubstituted N-terminus. This Danio rerio (Zebrafish) protein is Tripeptidyl-peptidase 1.